A 503-amino-acid polypeptide reads, in one-letter code: Maturase K (503 aa).

It belongs to the intron maturase 2 family. MatK subfamily.

The protein localises to the plastid. It is found in the chloroplast. In terms of biological role, usually encoded in the trnK tRNA gene intron. Probably assists in splicing its own and other chloroplast group II introns. The sequence is that of Maturase K from Rosa carolina (Pasture rose).